Consider the following 241-residue polypeptide: uncharacterized protein (241 aa).

The region spanning 32 to 86 is the HTH cro/C1-type domain; that stretch reads LKKWRNLFNIQQIELAKYLNVSPSVISDYEVGRRKNPGVNIIKKYVLALIEIDKE. A DNA-binding region (H-T-H motif) is located at residues 43-62; the sequence is QIELAKYLNVSPSVISDYEV.

This is an uncharacterized protein from Methanocaldococcus jannaschii (strain ATCC 43067 / DSM 2661 / JAL-1 / JCM 10045 / NBRC 100440) (Methanococcus jannaschii).